A 153-amino-acid polypeptide reads, in one-letter code: CASP-like protein 5B1 (153 aa).

The Cytoplasmic segment spans residues 1 to 20 (MRELAGSPGTWSGLSLRVGQ). The helical transmembrane segment at 21 to 41 (LVFAAASVCATASALGFAAYT) threads the bilayer. Position 42 (Ala-42) is a topological domain, extracellular. The chain crosses the membrane as a helical span at residues 43–63 (FCYLIASMGLQALWSLGLACL). Topologically, residues 64–76 (DCYALKFKKDLHS) are cytoplasmic. A helical membrane pass occupies residues 77–97 (AVLLSLFVVGDWVTAILSFAA). The Extracellular portion of the chain corresponds to 98–128 (SCSAAGVVVLFDRDIYACRNPQLPCGRFELA). Residues 129–149 (IACAFLSWAFSATSALVMFWL) traverse the membrane as a helical segment. Residues 150–153 (LASL) lie on the Cytoplasmic side of the membrane.

This sequence belongs to the Casparian strip membrane proteins (CASP) family. In terms of assembly, homodimer and heterodimers.

Its subcellular location is the cell membrane. This Oryza sativa subsp. indica (Rice) protein is CASP-like protein 5B1.